Consider the following 189-residue polypeptide: MDERRTVKVSKYLSKHLRHQPERIGLTLDENGWVAVEELLRAAARHGFAFSRAELDHVVAANDKRRFTVENGCAADGVHGDRIRANQGHTVAVDLDLPPAEPPAHLYHGTVARVMDAIRTEGLRPMARHHVHLSPDRETATRVGARRGRPLVLTVDAGAMHRAGHVFRVSANGVWLADAVPPRFLLLRG.

It belongs to the KptA/TPT1 family.

Its function is as follows. Removes the 2'-phosphate from RNA via an intermediate in which the phosphate is ADP-ribosylated by NAD followed by a presumed transesterification to release the RNA and generate ADP-ribose 1''-2''-cyclic phosphate (APPR&gt;P). May function as an ADP-ribosylase. The polypeptide is Probable RNA 2'-phosphotransferase (Streptomyces griseus subsp. griseus (strain JCM 4626 / CBS 651.72 / NBRC 13350 / KCC S-0626 / ISP 5235)).